A 325-amino-acid polypeptide reads, in one-letter code: GMP reductase (325 aa).

Cys-173 (thioimidate intermediate) is an active-site residue. NADP(+) is bound at residue 202–225 (IIADGGIRSHGDIAKSIRFGATMV).

It belongs to the IMPDH/GMPR family. GuaC type 2 subfamily.

It catalyses the reaction IMP + NH4(+) + NADP(+) = GMP + NADPH + 2 H(+). Catalyzes the irreversible NADPH-dependent deamination of GMP to IMP. It functions in the conversion of nucleobase, nucleoside and nucleotide derivatives of G to A nucleotides, and in maintaining the intracellular balance of A and G nucleotides. This Paracidovorax citrulli (strain AAC00-1) (Acidovorax citrulli) protein is GMP reductase.